A 195-amino-acid polypeptide reads, in one-letter code: Type II secretion system protein J (195 aa).

The propeptide at 1 to 7 (MINRQQG) is leader sequence. F8 carries the post-translational modification N-methylphenylalanine. A helical membrane pass occupies residues 8 to 29 (FTLLEVMAALAIFSMLSVLAFM).

Belongs to the GSP J family. As to quaternary structure, type II secretion is composed of four main components: the outer membrane complex, the inner membrane complex, the cytoplasmic secretion ATPase and the periplasm-spanning pseudopilus. Interacts with core component GspG. Cleaved by prepilin peptidase. Post-translationally, methylated by prepilin peptidase at the amino group of the N-terminal phenylalanine once the leader sequence is cleaved by prepilin peptidase.

It is found in the cell inner membrane. In terms of biological role, component of the type II secretion system required for the energy-dependent secretion of extracellular factors such as proteases and toxins from the periplasm. Part of the pseudopilus tip complex that is critical for the recognition and binding of secretion substrates. The sequence is that of Type II secretion system protein J (gspJ) from Escherichia coli (strain K12).